Reading from the N-terminus, the 118-residue chain is Large ribosomal subunit protein bL20 (118 aa).

The protein belongs to the bacterial ribosomal protein bL20 family.

In terms of biological role, binds directly to 23S ribosomal RNA and is necessary for the in vitro assembly process of the 50S ribosomal subunit. It is not involved in the protein synthesizing functions of that subunit. The chain is Large ribosomal subunit protein bL20 from Enterobacter sp. (strain 638).